We begin with the raw amino-acid sequence, 129 residues long: Prefoldin subunit 6 (129 aa).

Ala-2 is subject to N-acetylalanine. Position 21 is an N6-acetyllysine (Lys-21). Lys-66 carries the N6-acetyllysine; alternate modification. Residue Lys-66 forms a Glycyl lysine isopeptide (Lys-Gly) (interchain with G-Cter in SUMO1); alternate linkage. Lys-66 is covalently cross-linked (Glycyl lysine isopeptide (Lys-Gly) (interchain with G-Cter in SUMO2); alternate).

It belongs to the prefoldin subunit beta family. As to quaternary structure, heterohexamer of two PFD-alpha type and four PFD-beta type subunits. Component of the PAQosome complex which is responsible for the biogenesis of several protein complexes and which consists of R2TP complex members RUVBL1, RUVBL2, RPAP3 and PIH1D1, URI complex members PFDN2, PFDN6, PDRG1, UXT and URI1 as well as ASDURF, POLR2E and DNAAF10/WDR92.

Functionally, binds specifically to cytosolic chaperonin (c-CPN) and transfers target proteins to it. Binds to nascent polypeptide chain and promotes folding in an environment in which there are many competing pathways for nonnative proteins. The sequence is that of Prefoldin subunit 6 (PFDN6) from Canis lupus familiaris (Dog).